The chain runs to 249 residues: MPFEIVFDGAKEFADLIATASNLIDEAAFKITEEGVSMRAMDPSRVVLIDLNLPESIFSKYEVEEPETIGINMDHFKKILKRGKSKDTLILRKGDENFLEITFEGTAKRTFRLPLIDVEELELELPELPFTAKVVLLGEVLKEAIKDASLVSDSLKFIAKEDEFTMKAEGETNEVEIKLTLEDEGLLDLEVEEETRSAYGISYLADMVKGIGKADEVTLRFGTEMPLQMDYFIRDEGKLTFLLAPRVEE.

Belongs to the PCNA family. Homotrimer. The subunits circularize to form a toroid; DNA passes through its center. Replication factor C (RFC) is required to load the toroid on the DNA.

Sliding clamp subunit that acts as a moving platform for DNA processing. Responsible for tethering the catalytic subunit of DNA polymerase and other proteins to DNA during high-speed replication. This chain is DNA polymerase sliding clamp, found in Thermococcus gammatolerans (strain DSM 15229 / JCM 11827 / EJ3).